The chain runs to 356 residues: DNA polymerase IV (356 aa).

Positions 6–187 constitute a UmuC domain; it reads IIHIDMDYFF…LDIGDFPGVG (182 aa). The Mg(2+) site is built by Asp-10 and Asp-105. Glu-106 is an active-site residue.

This sequence belongs to the DNA polymerase type-Y family. In terms of assembly, monomer. It depends on Mg(2+) as a cofactor.

Its subcellular location is the cytoplasm. The enzyme catalyses DNA(n) + a 2'-deoxyribonucleoside 5'-triphosphate = DNA(n+1) + diphosphate. In terms of biological role, poorly processive, error-prone DNA polymerase involved in untargeted mutagenesis. Copies undamaged DNA at stalled replication forks, which arise in vivo from mismatched or misaligned primer ends. These misaligned primers can be extended by PolIV. Exhibits no 3'-5' exonuclease (proofreading) activity. May be involved in translesional synthesis, in conjunction with the beta clamp from PolIII. The protein is DNA polymerase IV of Staphylococcus aureus (strain MRSA252).